The following is a 213-amino-acid chain: Translation initiation factor IF-3 (213 aa).

Positions 193–213 are disordered; the sequence is EKIASLPPLPPDNSGEPEDDE.

Belongs to the IF-3 family. Monomer.

Its subcellular location is the cytoplasm. IF-3 binds to the 30S ribosomal subunit and shifts the equilibrium between 70S ribosomes and their 50S and 30S subunits in favor of the free subunits, thus enhancing the availability of 30S subunits on which protein synthesis initiation begins. The protein is Translation initiation factor IF-3 of Chlorobaculum tepidum (strain ATCC 49652 / DSM 12025 / NBRC 103806 / TLS) (Chlorobium tepidum).